The sequence spans 105 residues: Phosphoribosyl-ATP pyrophosphatase (105 aa).

It belongs to the PRA-PH family.

Its subcellular location is the cytoplasm. It catalyses the reaction 1-(5-phospho-beta-D-ribosyl)-ATP + H2O = 1-(5-phospho-beta-D-ribosyl)-5'-AMP + diphosphate + H(+). It functions in the pathway amino-acid biosynthesis; L-histidine biosynthesis; L-histidine from 5-phospho-alpha-D-ribose 1-diphosphate: step 2/9. This Methylococcus capsulatus (strain ATCC 33009 / NCIMB 11132 / Bath) protein is Phosphoribosyl-ATP pyrophosphatase.